Consider the following 590-residue polypeptide: J protein JJJ1 (590 aa).

Residues 3–72 enclose the J domain; that stretch reads TCYYELLGVE…RAWYDSHKEQ (70 aa). The span at 269–284 shows a compositional bias: basic and acidic residues; that stretch reads EQRKLKEQQRKNELNN. Residues 269-293 form a disordered region; that stretch reads EQRKLKEQQRKNELNNRRKFGNDNN. The C2H2-type 1 zinc finger occupies 338-362; the sequence is YECFICNKTFKSEKQLKNHINTKLH. S393 carries the phosphoserine modification. Positions 441-546 are disordered; sequence EVEDVSSDEN…TLPSSMSPTS (106 aa). A compositionally biased stretch (basic residues) spans 455-467; that stretch reads TKNKKKRKKKKKA. The segment covering 480 to 489 has biased composition (basic and acidic residues); sequence DDTKDKRSNE. The residue at position 504 (T504) is a Phosphothreonine. A compositionally biased stretch (basic residues) spans 513–527; the sequence is KAKKKKGKQPKKNSK. Residues 528 to 546 are compositionally biased toward low complexity; the sequence is STKSTPSLSTLPSSMSPTS. Residues 549 to 573 form a C2H2-type 2 zinc finger; it reads EVCTTCGESFDSRNKLFNHVKIAGH.

It localises to the nucleus. This is J protein JJJ1 (JJJ1) from Saccharomyces cerevisiae (strain ATCC 204508 / S288c) (Baker's yeast).